The chain runs to 141 residues: MFGISFSELLLVGLVALLVLGPERLPGAARTAGLWIGRLKRSFNTIKQEVEREIGADEIRRQLHNEHILSMEREAQKLLAPLTGQNPPQETPPPAAESPAPSVPTPPPTSTPAVPPADAAAPPAVAASTPPSPPSETPRNP.

Residues 1-21 (MFGISFSELLLVGLVALLVLG) traverse the membrane as a helical segment. The tract at residues 74 to 141 (EAQKLLAPLT…SPPSETPRNP (68 aa)) is disordered. Residues 89-115 (QETPPPAAESPAPSVPTPPPTSTPAVP) show a composition bias toward pro residues. The segment covering 116–129 (PADAAAPPAVAAST) has biased composition (low complexity). Pro residues predominate over residues 130-141 (PPSPPSETPRNP).

It belongs to the TatB family. As to quaternary structure, the Tat system comprises two distinct complexes: a TatABC complex, containing multiple copies of TatA, TatB and TatC subunits, and a separate TatA complex, containing only TatA subunits. Substrates initially bind to the TatABC complex, which probably triggers association of the separate TatA complex to form the active translocon.

It is found in the cell inner membrane. Part of the twin-arginine translocation (Tat) system that transports large folded proteins containing a characteristic twin-arginine motif in their signal peptide across membranes. Together with TatC, TatB is part of a receptor directly interacting with Tat signal peptides. TatB may form an oligomeric binding site that transiently accommodates folded Tat precursor proteins before their translocation. This chain is Sec-independent protein translocase protein TatB, found in Pseudomonas aeruginosa (strain ATCC 15692 / DSM 22644 / CIP 104116 / JCM 14847 / LMG 12228 / 1C / PRS 101 / PAO1).